The following is a 375-amino-acid chain: UDP-N-acetylglucosamine--N-acetylmuramyl-(pentapeptide) pyrophosphoryl-undecaprenol N-acetylglucosamine transferase (375 aa).

UDP-N-acetyl-alpha-D-glucosamine contacts are provided by residues 13-15 (TGG), Asn-124, Arg-165, Ser-193, and Gln-294.

The protein belongs to the glycosyltransferase 28 family. MurG subfamily.

It is found in the cell inner membrane. It carries out the reaction di-trans,octa-cis-undecaprenyl diphospho-N-acetyl-alpha-D-muramoyl-L-alanyl-D-glutamyl-meso-2,6-diaminopimeloyl-D-alanyl-D-alanine + UDP-N-acetyl-alpha-D-glucosamine = di-trans,octa-cis-undecaprenyl diphospho-[N-acetyl-alpha-D-glucosaminyl-(1-&gt;4)]-N-acetyl-alpha-D-muramoyl-L-alanyl-D-glutamyl-meso-2,6-diaminopimeloyl-D-alanyl-D-alanine + UDP + H(+). It functions in the pathway cell wall biogenesis; peptidoglycan biosynthesis. In terms of biological role, cell wall formation. Catalyzes the transfer of a GlcNAc subunit on undecaprenyl-pyrophosphoryl-MurNAc-pentapeptide (lipid intermediate I) to form undecaprenyl-pyrophosphoryl-MurNAc-(pentapeptide)GlcNAc (lipid intermediate II). This Brucella anthropi (strain ATCC 49188 / DSM 6882 / CCUG 24695 / JCM 21032 / LMG 3331 / NBRC 15819 / NCTC 12168 / Alc 37) (Ochrobactrum anthropi) protein is UDP-N-acetylglucosamine--N-acetylmuramyl-(pentapeptide) pyrophosphoryl-undecaprenol N-acetylglucosamine transferase.